The sequence spans 424 residues: Homeobox even-skipped homolog protein 2 (424 aa).

Disordered regions lie at residues 18–65 (PAGK…DTPT) and 132–178 (TTQL…GPDQ). 2 stretches are compositionally biased toward polar residues: residues 50–65 (RPTS…DTPT) and 132–145 (TTQL…VYSD). The segment covering 146–175 (NGSSTNTSSNGSNITNLNGNSSSIGNSGSG) has biased composition (low complexity). Positions 179–238 (VRRYRTAFTREQIGRLEKEFYRENYVSRPRRCELAAALNLPETTIKVWFQNRRMKDKRQR) form a DNA-binding region, homeobox.

Belongs to the even-skipped homeobox family.

It localises to the nucleus. This is Homeobox even-skipped homolog protein 2 (EVX2) from Heterodontus francisci (Horn shark).